We begin with the raw amino-acid sequence, 120 residues long: MADSVRFPCMPFPPCFLVCTRDDIYEDEHGRQWVAAKVETSSHSPYCSKIETCVTVHLWQMTTLFQEPSPDSLKTFNFLPRTWRLESRNTYRGADAMHWRLVNHSQFYGTEELVLMLDSR.

The protein belongs to the TCL1 family.

This is Protein TCL1B4 (Tcl1b4) from Mus musculus (Mouse).